The chain runs to 315 residues: Methionyl-tRNA formyltransferase (315 aa).

113 to 116 (SLLP) provides a ligand contact to (6S)-5,6,7,8-tetrahydrofolate.

It belongs to the Fmt family.

The enzyme catalyses L-methionyl-tRNA(fMet) + (6R)-10-formyltetrahydrofolate = N-formyl-L-methionyl-tRNA(fMet) + (6S)-5,6,7,8-tetrahydrofolate + H(+). Its function is as follows. Attaches a formyl group to the free amino group of methionyl-tRNA(fMet). The formyl group appears to play a dual role in the initiator identity of N-formylmethionyl-tRNA by promoting its recognition by IF2 and preventing the misappropriation of this tRNA by the elongation apparatus. The polypeptide is Methionyl-tRNA formyltransferase (Escherichia fergusonii (strain ATCC 35469 / DSM 13698 / CCUG 18766 / IAM 14443 / JCM 21226 / LMG 7866 / NBRC 102419 / NCTC 12128 / CDC 0568-73)).